The primary structure comprises 301 residues: MNIIFMGTPAYARTILDALVRAGIGVAGVFTQPDKPVGRKQILTPSEVKIYAQQNLPHAKIFQPKTLKEGTVAAEILALKPDFIVVAAYGKILPKSVLDIAPCINLHASILPKYRGASPIQAALLNGEKNTGVTAMLMDEGLDTGDMLGFTHVSCEGKRSAEMFEILGELAGELAVKTLFDFKNLTPQKQDDALATHCKKIQKSDGLVNLSEDAEQIYNKFRAFHEWPGVFLESGLKFLELNLAEGSGAAGEILRIEKDGFVVACGTGALKILALQEAGKKALDAKAYINGKRLVAGNKIS.

Residue 109 to 112 (SILP) coordinates (6S)-5,6,7,8-tetrahydrofolate.

This sequence belongs to the Fmt family.

The enzyme catalyses L-methionyl-tRNA(fMet) + (6R)-10-formyltetrahydrofolate = N-formyl-L-methionyl-tRNA(fMet) + (6S)-5,6,7,8-tetrahydrofolate + H(+). Its function is as follows. Attaches a formyl group to the free amino group of methionyl-tRNA(fMet). The formyl group appears to play a dual role in the initiator identity of N-formylmethionyl-tRNA by promoting its recognition by IF2 and preventing the misappropriation of this tRNA by the elongation apparatus. The polypeptide is Methionyl-tRNA formyltransferase (Campylobacter curvus (strain 525.92)).